We begin with the raw amino-acid sequence, 256 residues long: Hydroxypyruvate/pyruvate aldolase (256 aa).

Catalysis depends on His48, which acts as the Proton acceptor. Positions 152 and 178 each coordinate a divalent metal cation.

This sequence belongs to the HpcH/HpaI aldolase family. Requires a divalent metal cation as cofactor.

It catalyses the reaction D-glyceraldehyde + pyruvate = 2-dehydro-3-deoxy-L-galactonate. In terms of biological role, aldolase which can catalyze in vitro the aldolisation reaction between hydroxypyruvate (HPA) or pyruvate (PA) and D-glyceraldehyde (D-GA). The condensation of pyruvate and D-glyceraldehyde produces 2-dehydro-3-deoxy-L-galactonate as the major product. Has weak activity with hydroxypyruvate and D-glyceraldehyde. This chain is Hydroxypyruvate/pyruvate aldolase, found in Roseobacter denitrificans (strain ATCC 33942 / OCh 114) (Erythrobacter sp. (strain OCh 114)).